Consider the following 343-residue polypeptide: Photosystem II protein D1 (343 aa).

Transmembrane regions (helical) follow at residues 28–45, 117–132, and 141–155; these read YIGW…VSTV, HFLA…EYEY, and WIYL…AASA. H117 contributes to the chlorophyll a binding site. W125 serves as a coordination point for pheophytin a. Residues D169 and E188 each coordinate [CaMn4O5] cluster. The chain crosses the membrane as a helical span at residues 196-217; it reads FHILGVSAVFGGSLFSAMHGSL. A chlorophyll a-binding site is contributed by H197. Residues H214 and 263–264 contribute to the a quinone site; that span reads SF. H214 provides a ligand contact to Fe cation. H271 provides a ligand contact to Fe cation. The chain crosses the membrane as a helical span at residues 273-287; it reads FLAAWPVIGIWCTAI. 4 residues coordinate [CaMn4O5] cluster: H331, E332, D341, and A343.

The protein belongs to the reaction center PufL/M/PsbA/D family. In terms of assembly, PSII is composed of 1 copy each of membrane proteins PsbA, PsbB, PsbC, PsbD, PsbE, PsbF, PsbH, PsbI, PsbJ, PsbK, PsbL, PsbM, PsbT, PsbX, PsbY, PsbZ, Psb30/Ycf12, at least 3 peripheral proteins of the oxygen-evolving complex and a large number of cofactors. It forms dimeric complexes. The cofactor is The D1/D2 heterodimer binds P680, chlorophylls that are the primary electron donor of PSII, and subsequent electron acceptors. It shares a non-heme iron and each subunit binds pheophytin, quinone, additional chlorophylls, carotenoids and lipids. D1 provides most of the ligands for the Mn4-Ca-O5 cluster of the oxygen-evolving complex (OEC). There is also a Cl(-1) ion associated with D1 and D2, which is required for oxygen evolution. The PSII complex binds additional chlorophylls, carotenoids and specific lipids.. Tyr-160 forms a radical intermediate that is referred to as redox-active TyrZ, YZ or Y-Z.

Its subcellular location is the plastid. The protein localises to the chloroplast thylakoid membrane. The catalysed reaction is 2 a plastoquinone + 4 hnu + 2 H2O = 2 a plastoquinol + O2. In terms of biological role, photosystem II (PSII) is a light-driven water:plastoquinone oxidoreductase that uses light energy to abstract electrons from H(2)O, generating O(2) and a proton gradient subsequently used for ATP formation. It consists of a core antenna complex that captures photons, and an electron transfer chain that converts photonic excitation into a charge separation. The D1/D2 (PsbA/PsbD) reaction center heterodimer binds P680, the primary electron donor of PSII as well as several subsequent electron acceptors. In Prorocentrum micans (Red tide dinoflagellate), this protein is Photosystem II protein D1.